Here is a 445-residue protein sequence, read N- to C-terminus: MKIFGTDGVRGRAGVKLTPMFVMRLGIAAGLYFKKHSKTDKILIGKDTRKSGYMVENALVSALTSIGYNVIQIGPMPTPAIAFLTEDMRCDAGIMISASHNPFEDNGIKFFNSYGYKLKEEEERAIEEIFHNEELLHSSYKVGESVGNAKRIDDVIGRYIVHLKHSFPKHLNLQSLRIVLDTANGAAYKVAPVVFSELGADVLVINDEPNGCNINEQCGALHPNQLSQEVKKYRADLGFAFDGDADRLVVVDNLGNIVHGDKLLGVLGVYQKSKNALSSQAIVATNMSNLALKEYLKSQDLELKHCTIGDKFVSECMQLNKANFGGEQSGHIIFSDYAKTGDGLVCALQVSALVLESKLASSVALNPFELYPQSLVNLDIQKKLPLESLKGYSALLKELDKLEIRHLIRYSGTENKLRILLEAKDEKLLELKMQELKEFFEGHLC.

Ser99 functions as the Phosphoserine intermediate in the catalytic mechanism. Positions 99, 242, 244, and 246 each coordinate Mg(2+). Ser99 is subject to Phosphoserine.

It belongs to the phosphohexose mutase family. Mg(2+) serves as cofactor. Post-translationally, activated by phosphorylation.

The enzyme catalyses alpha-D-glucosamine 1-phosphate = D-glucosamine 6-phosphate. Catalyzes the conversion of glucosamine-6-phosphate to glucosamine-1-phosphate. The polypeptide is Phosphoglucosamine mutase (Helicobacter acinonychis (strain Sheeba)).